The sequence spans 339 residues: Anthranilate phosphoribosyltransferase (339 aa).

Residues glycine 79, 82-83 (GD), serine 87, 89-92 (NIST), 107-115 (KHGNRAASS), and alanine 119 contribute to the 5-phospho-alpha-D-ribose 1-diphosphate site. Glycine 79 is an anthranilate binding site. Residue serine 91 participates in Mg(2+) binding. Asparagine 110 contributes to the anthranilate binding site. Arginine 165 contributes to the anthranilate binding site. Positions 224 and 225 each coordinate Mg(2+).

This sequence belongs to the anthranilate phosphoribosyltransferase family. Homodimer. Mg(2+) is required as a cofactor.

It carries out the reaction N-(5-phospho-beta-D-ribosyl)anthranilate + diphosphate = 5-phospho-alpha-D-ribose 1-diphosphate + anthranilate. The protein operates within amino-acid biosynthesis; L-tryptophan biosynthesis; L-tryptophan from chorismate: step 2/5. Functionally, catalyzes the transfer of the phosphoribosyl group of 5-phosphorylribose-1-pyrophosphate (PRPP) to anthranilate to yield N-(5'-phosphoribosyl)-anthranilate (PRA). This Lactiplantibacillus plantarum (strain ATCC BAA-793 / NCIMB 8826 / WCFS1) (Lactobacillus plantarum) protein is Anthranilate phosphoribosyltransferase.